Reading from the N-terminus, the 518-residue chain is GMP synthase [glutamine-hydrolyzing] (518 aa).

Residues 6-200 (RLLIIDFGSQ…FVRLAGFKGD (195 aa)) form the Glutamine amidotransferase type-1 domain. C84 acts as the Nucleophile in catalysis. Residues H175 and E177 contribute to the active site. A GMPS ATP-PPase domain is found at 201–393 (WTMGAYREEA…LGLPESFIGR (193 aa)). 228-234 (SGGVDSS) contacts ATP.

As to quaternary structure, homodimer.

It carries out the reaction XMP + L-glutamine + ATP + H2O = GMP + L-glutamate + AMP + diphosphate + 2 H(+). It functions in the pathway purine metabolism; GMP biosynthesis; GMP from XMP (L-Gln route): step 1/1. Catalyzes the synthesis of GMP from XMP. In Cereibacter sphaeroides (strain ATCC 17023 / DSM 158 / JCM 6121 / CCUG 31486 / LMG 2827 / NBRC 12203 / NCIMB 8253 / ATH 2.4.1.) (Rhodobacter sphaeroides), this protein is GMP synthase [glutamine-hydrolyzing].